The chain runs to 508 residues: BTB/POZ domain-containing protein At3g03510 (508 aa).

Residues 11–77 enclose the BTB domain; that stretch reads QDLDLYVKGV…CYGYKIELSA (67 aa). An NPH3 domain is found at 156–414; it reads TRLLQDLITL…MQVLFVSQMQ (259 aa). Tyrosine 355 is modified (phosphotyrosine).

It belongs to the NPH3 family.

It functions in the pathway protein modification; protein ubiquitination. In terms of biological role, may act as a substrate-specific adapter of an E3 ubiquitin-protein ligase complex (CUL3-RBX1-BTB) which mediates the ubiquitination and subsequent proteasomal degradation of target proteins. The protein is BTB/POZ domain-containing protein At3g03510 of Arabidopsis thaliana (Mouse-ear cress).